Here is a 413-residue protein sequence, read N- to C-terminus: BSD domain-containing protein 1-A (413 aa).

One can recognise a BSD domain in the interval 146–198; sequence WLAYWDPEQRKAEISELLVTSPSIRALFTKMVPAAVSHSEFWQRYFYKVHQLE. 2 stretches are compositionally biased toward basic and acidic residues: residues 208 to 219 and 255 to 271; these read KQRADQSVHSEE and HVED…RDHT. Disordered regions lie at residues 208 to 228 and 255 to 386; these read KQRA…EEED and HVED…EFDM. The span at 274 to 287 shows a compositional bias: low complexity; it reads TSPSESSESISPIT. The segment covering 297–322 has biased composition (polar residues); that stretch reads QTPSKEPSPGTLTVTKENTGAGTDET. Residues 342–352 are compositionally biased toward basic and acidic residues; sequence QREDPPSDLRV. Over residues 356–375 the composition is skewed to polar residues; the sequence is NSDSGKSTPSNNGQKGSSTD. Acidic residues predominate over residues 376–386; it reads ISEDWEKEFDM.

This Xenopus laevis (African clawed frog) protein is BSD domain-containing protein 1-A (bsdc1-a).